We begin with the raw amino-acid sequence, 160 residues long: Cathelin-related peptide SC5 (160 aa).

An N-terminal signal peptide occupies residues 1–29 (METQRASLSLGRRSLWLLLLGLVLASASA). Positions 30-131 (QALSYREAVL…DITCAEPQSV (102 aa)) are excised as a propeptide. Intrachain disulfides connect Cys86–Cys97 and Cys108–Cys125.

The protein belongs to the cathelicidin family.

The protein localises to the secreted. Functionally, broad spectrum bactericidal agent. This Ovis aries (Sheep) protein is Cathelin-related peptide SC5.